The sequence spans 485 residues: Zinc finger SWIM domain-containing protein 1 (485 aa).

An SWIM-type zinc finger spans residues 363 to 405 (MNIQILEDTHKVQPQPPASCSCYFNQAFHLPCRHILAMLSARR).

The polypeptide is Zinc finger SWIM domain-containing protein 1 (ZSWIM1) (Homo sapiens (Human)).